The following is a 242-amino-acid chain: Sensory transduction protein LytT (242 aa).

The Response regulatory domain occupies His2–Ser116. The 105-residue stretch at Ile137–Leu241 folds into the HTH LytTR-type domain.

Post-translationally, phosphorylated by LytS.

Its subcellular location is the cytoplasm. Its function is as follows. Member of the two-component regulatory system LytS/LytT that probably regulates genes involved in cell wall metabolism. This is Sensory transduction protein LytT (lytT) from Enterococcus faecalis (strain ATCC 700802 / V583).